Here is a 284-residue protein sequence, read N- to C-terminus: MSADGRSGRLRFTKMHGAGNDFVVLDLRDGTPPPDAALAAQLADRHFGVGCDQILTIEAPRSEGAVAAYGIWNSDGSAARQCGNGARCVAAWLVRDGTAQGERFIIDSPMSAHAVERLDGDRYAVAMGVPQFEPAQIPLAGFAHARDEYALPVHGETVRFGAVSMGNPHAVVEVGRVDAAPVERVGALLQQNAAFPDSVNVGFVQVVDPAHVRLRVFERGVGETLACGSGACAAAVVLMQRGRVERDVQVSLPGGELRIRWPGDQEQVVMSGPAVFVFDGEWNR.

Residues N20, Q53, and N73 each coordinate substrate. C82 acts as the Proton donor in catalysis. Residues 83–84 (GN), N167, N200, and 218–219 (ER) contribute to the substrate site. C227 serves as the catalytic Proton acceptor. Residue 228–229 (GS) participates in substrate binding.

It belongs to the diaminopimelate epimerase family. Homodimer.

It localises to the cytoplasm. The catalysed reaction is (2S,6S)-2,6-diaminopimelate = meso-2,6-diaminopimelate. The protein operates within amino-acid biosynthesis; L-lysine biosynthesis via DAP pathway; DL-2,6-diaminopimelate from LL-2,6-diaminopimelate: step 1/1. Its function is as follows. Catalyzes the stereoinversion of LL-2,6-diaminopimelate (L,L-DAP) to meso-diaminopimelate (meso-DAP), a precursor of L-lysine and an essential component of the bacterial peptidoglycan. This chain is Diaminopimelate epimerase, found in Xanthomonas euvesicatoria pv. vesicatoria (strain 85-10) (Xanthomonas campestris pv. vesicatoria).